We begin with the raw amino-acid sequence, 471 residues long: 3-isopropylmalate dehydratase large subunit (471 aa).

Residues Cys347, Cys407, and Cys410 each coordinate [4Fe-4S] cluster.

This sequence belongs to the aconitase/IPM isomerase family. LeuC type 1 subfamily. In terms of assembly, heterodimer of LeuC and LeuD. The cofactor is [4Fe-4S] cluster.

The enzyme catalyses (2R,3S)-3-isopropylmalate = (2S)-2-isopropylmalate. It participates in amino-acid biosynthesis; L-leucine biosynthesis; L-leucine from 3-methyl-2-oxobutanoate: step 2/4. In terms of biological role, catalyzes the isomerization between 2-isopropylmalate and 3-isopropylmalate, via the formation of 2-isopropylmaleate. The chain is 3-isopropylmalate dehydratase large subunit from Anoxybacillus flavithermus (strain DSM 21510 / WK1).